A 339-amino-acid polypeptide reads, in one-letter code: MENNKKENNKKENNLKILEETIKEVEKQFGKGSIFKLNSNNNQSIETISTGSMSLDIALGIGGYPKGRIIEIFGPESSGKTTLTLHAIAEAQKLGGNVAFIDAEHALDPKYAQAIGVNIDELVLSQPDSGEKALDIATSLIKSGSISLLVIDSVAALTPESELMGEMKDINVGLQARMMGKAMRIQSGIISKTNTVVIYINQLREKVGNFYGNPEVTTGGKALKFFCSLRLDIRRTAEKIKNNNDEIIGVKSNIKIVKSKVSTPFKTATVDIIYGKGISKIGEILDLAIDLNLIKRNGAWYNYKNENFAQGKENAKIFLQNNLEIYNFLEEQIRKKYKI.

74 to 81 is an ATP binding site; that stretch reads GPESSGKT.

The protein belongs to the RecA family.

It localises to the cytoplasm. Its function is as follows. Can catalyze the hydrolysis of ATP in the presence of single-stranded DNA, the ATP-dependent uptake of single-stranded DNA by duplex DNA, and the ATP-dependent hybridization of homologous single-stranded DNAs. It interacts with LexA causing its activation and leading to its autocatalytic cleavage. The protein is Protein RecA of Phytoplasma mali (strain AT).